Here is a 387-residue protein sequence, read N- to C-terminus: Dynactin subunit 2 (387 aa).

Coiled-coil stretches lie at residues 99–125, 256–282, and 355–387; these read LQRCHRLKCEMNELMEEIEASRADTGR, SQLDTIEQRLNNLLQQMNSIQEKSNAT, and TGVQEAFAQNLENVNKEVKKLEERMTKLQQMIK.

This sequence belongs to the dynactin subunit 2 family. In terms of assembly, subunit of dynactin, a multiprotein complex associated with dynein.

The protein resides in the cytoplasm. Its subcellular location is the cytoskeleton. It is found in the membrane. Modulates cytoplasmic dynein binding to an organelle, and plays a role in prometaphase chromosome alignment and spindle organization during mitosis. The chain is Dynactin subunit 2 from Anopheles gambiae (African malaria mosquito).